A 920-amino-acid polypeptide reads, in one-letter code: Whirlin (920 aa).

One can recognise a PDZ 1 domain in the interval 141-224 (LVSLRRAKAH…LVLSVYSAGR (84 aa)). Residues 241 to 262 (QGRSTSPPSSLPHGSTLRQHED) form a disordered region. Over residues 242–257 (GRSTSPPSSLPHGSTL) the composition is skewed to polar residues. Residues 278–360 (KVNLVLGDGR…LILTVKDVGR (83 aa)) enclose the PDZ 2 domain. 4 disordered regions span residues 502–536 (MKARQPPGPGVGDTYSMVSYSDTGSSTGSHGTSTT), 561–603 (CETT…QGHD), 630–730 (FSAP…AMGA), and 752–828 (RALP…PTST). Residues 520–536 (SYSDTGSSTGSHGTSTT) are compositionally biased toward low complexity. Residues 561-570 (CETTQGSTNA) show a composition bias toward polar residues. 2 stretches are compositionally biased toward pro residues: residues 589–598 (IKPPPPPPPL) and 636–651 (RSPPPPPGIAPTPTPG). Polar residues predominate over residues 655–674 (ARDSPSSPIYASISHANPSS). The residue at position 698 (serine 698) is a Phosphoserine. Polar residues-rich tracts occupy residues 756–775 (QTRTASTLSQLSDSGQTLSE) and 785–800 (EASTSGRGRQTANTKN). Over residues 802–813 (NGKELPQTERTT) the composition is skewed to basic and acidic residues. Positions 829–912 (LIRVRKSAAT…TKERDYIDFL (84 aa)) constitute a PDZ 3 domain.

Forms homooligomers. Interacts (via C-terminal PDZ domain) with MYO15A; this interaction is necessary for localization of WHRN to stereocilia tips. Interacts (via C-terminal PDZ domain) with MPP1/p55. Interacts with LRRC4C/NGL1. Interacts with MYO7A. Interacts with RPGR. Interacts with EPS8. Interacts with CASK. Interacts with CIB2. Component of USH2 complex, composed of ADGRV1, PDZD7, USH2A and WHRN. Interacts (via PDZ domains) with PDZD7; the interaction is direct. Interacts (via N-terminal PDZ domain) with USH2A (via cytoplasmic region). Interacts with ADGRV1/MASS1 (via cytoplasmic region). As to expression, ubiquitous. Highly expressed in heart, spleen, lung and liver. Highly expressed in brain, in the olfactory bulb, thalamus, layers III-V of the cerebral cortex and the molecular layer of cerebellum. Detected in soma and dendrites of thalamic neurons, and in cerebrum in cell bodies and apical dendrites of pyramidal neurons. Expressed in retina and inner ear.

The protein resides in the cytoplasm. The protein localises to the cell projection. Its subcellular location is the stereocilium. It localises to the growth cone. It is found in the synapse. Functionally, involved in hearing and vision as member of the USH2 complex. Necessary for elongation and maintenance of inner and outer hair cell stereocilia in the organ of Corti in the inner ear. Involved in the maintenance of the hair bundle ankle region, which connects stereocilia in cochlear hair cells of the inner ear. In retina photoreceptors, required for the maintenance of periciliary membrane complex that seems to play a role in regulating intracellular protein transport. The protein is Whirlin of Rattus norvegicus (Rat).